A 122-amino-acid chain; its full sequence is Large ribosomal subunit protein uL14 (122 aa).

It belongs to the universal ribosomal protein uL14 family. In terms of assembly, part of the 50S ribosomal subunit. Forms a cluster with proteins L3 and L19. In the 70S ribosome, L14 and L19 interact and together make contacts with the 16S rRNA in bridges B5 and B8.

Binds to 23S rRNA. Forms part of two intersubunit bridges in the 70S ribosome. The protein is Large ribosomal subunit protein uL14 of Nitrosomonas eutropha (strain DSM 101675 / C91 / Nm57).